The chain runs to 1456 residues: MLHHCVLHIICALFFFLPLGGADSNYAISKLGTASKSQKSLIVNFSKSRNILLLDATGTLLLSQDDGTSWQDAVSNSDPAVVEQLYQHPFEDDIVYAITKESDILVSEDAGLTWFTVTMPPKTVIEAQPFEFNARQSQSVILNAARCESGSIWTGVTCYPFTYYTYDNFRNLDSVHDSIVSCTFAVGTVEFAGQDEDQMLCLIRENDVDLQAPFNQQLISVSKGFESIDYVVFDPYYGSLGTESVVAVGQYLVAAVVDVNSKKLKLHYSTDGQIWVPITFINAPSIGSLTVTRSTSLTLGVDVESTNLKNPVGEFYTISPSDAYAVRRLNDTNRDTRGYVDVIELDYLNNTILANTVANTEDLYKRASRQKELVTKISHDGGFSWTQLERPVDLECEGDDAEDCHLHLHLGITETKFGSLSPDRLPGVIMALGSVGTHLQPLSDSDLFISEDAGRSWYLSLQGPHYYSSSAYGSVFVAVKANENSKLIYYSLDFGREWESLEVEASFRALEIIPPKSLDSLTFLIRAKVKKEESFIAIDFSSILSRECTFDEKKVANGDFELWYPFVMDDTPQCLMGRIEYYLRKKRAVSCVVRNEVPVHSFVEQICTCESKDYECSTYFEPSDHFTCEVNPESLDPLCRVDPDATLQLKPYRILLGNSCVPKKKEEKEKSISMKCPKLDHRKDIHMYHHKIQDTISNIVYMEGTGEPDSTTELLLTSSQKVLFSYDFGEEWLEFDEKKNPSFYGIYPHAFLKDTAFLLTKDRKIYFTNNKGRSFYRLDAPSPPNVVGYPVFNFHSLHPNWVMYMGSENCDDSFYEDCRSVVYLSFDSGASWQKLPDELEYCSWVLGERLLVEDKLLFCNRRRAAADSIGYDLVASTDFFETEASSIRENVLGFLLADEYVVIAALTDDETSLSMHVSVNGRNFSPCIFPQNIQVHSQQAYTILSSKTRALFIHVTLSSRKGAEWGSVLKSNSNGTYFVNVLDKVNRNELGYVDFEKVEGLESIALANVVLNSDEAFNGEEKRLGTLITFNDGIDWERLYLIDAKKHYPHCDSKCSLHFHGFTERSVFSDPTSSSAATGIIFGIGSYSYYLEPYETSQTFISRDGGVHWELIFDSPHQWAFVDSGSLLVAVPSTNKTNILYYSEDEGRSWIAYQFAEDTYLIEDLSTAPSGNSQRILVLAKGKKSSETISFTVDFSHLRSRVCVFDFNDQRDFASWTPAGRDGKPMCLFGHKTAFYRRKPGRDCFIGNTPYVSDTIISNCQCTRMDYECNYNYERIAGGTCRLVSGAEPPLQQEEQCAAEGAIEWMEPTAYKRIPLTTCEGGLVLDESTTHPCPGKEDDYHKIHPGTPVWLIIMLVLLSVFLSTIVGAWVYTKAQSYLVGAIRLGEDPADETVFAKLMTRIESVVTAVPIFFSAAYHLVRSVFVRQDRSMSLDDYDNFEGMEDAAFLEVDDIETSE.

A signal peptide spans 1–22 (MLHHCVLHIICALFFFLPLGGA). The Lumenal segment spans residues 23 to 1348 (DSNYAISKLG…DYHKIHPGTP (1326 aa)). N44 is a glycosylation site (N-linked (GlcNAc...) asparagine). BNR repeat units lie at residues 62-71 (LSQDDGTSWQ) and 106-114 (VSEDAGLTW). N-linked (GlcNAc...) asparagine glycans are attached at residues N330 and N349. BNR repeat units follow at residues 448-458 (FISEDAGRSWY), 489-499 (YYSLDFGREWE), and 823-834 (YLSFDSGASWQK). An N-linked (GlcNAc...) asparagine glycan is attached at N974. The BNR 6 repeat unit spans residues 1100-1110 (FISRDGGVHWE). N1135 carries N-linked (GlcNAc...) asparagine glycosylation. A BNR 7 repeat occupies 1141–1150 (YYSEDEGRSW). The chain crosses the membrane as a helical span at residues 1349–1369 (VWLIIMLVLLSVFLSTIVGAW). Residues 1370–1456 (VYTKAQSYLV…LEVDDIETSE (87 aa)) lie on the Cytoplasmic side of the membrane.

The protein belongs to the VPS10-related sortilin family.

The protein resides in the golgi apparatus. Its subcellular location is the trans-Golgi network membrane. The protein localises to the prevacuolar compartment membrane. In terms of biological role, functions as a sorting receptor in the Golgi compartment required for the intracellular sorting and delivery of soluble vacuolar proteins, like carboxypeptidase Y (CPY) and proteinase A. Executes multiple rounds of sorting by cycling between the late Golgi and a prevacuolar endosome-like compartment. This is Vacuolar protein sorting/targeting protein 10 (vps10) from Schizosaccharomyces japonicus (strain yFS275 / FY16936) (Fission yeast).